Here is a 118-residue protein sequence, read N- to C-terminus: Secreted effector CSEP0064 (118 aa).

Positions 1-21 (MRPFQLLSALAIFINLEAVEA) are cleaved as a signal peptide. A disulfide bridge links cysteine 27 with cysteine 113.

In terms of assembly, interacts in planta with the pathogenesis-related protein PR10.

It localises to the secreted. The protein localises to the host cell. Its function is as follows. Secreted effector that increases susceptibility to infection in both monocotyledonous and dicotyledonous plants. Non-catalytic homolog of fungal RNases that binds host RNA and inhibits the degradation of host ribosomal RNA induced by ribosome-inactivating proteins (RIPs), preventing host cell death, an inviable interaction and demise of the fungus. The sequence is that of Secreted effector CSEP0064 from Blumeria graminis f. sp. hordei (strain DH14) (Barley powdery mildew).